A 502-amino-acid polypeptide reads, in one-letter code: UDP-glucuronosyltransferase 2C1 (502 aa).

N-linked (GlcNAc...) asparagine glycosylation is found at Asn-177 and Asn-288. The chain crosses the membrane as a helical span at residues Val-466–Ala-481.

This sequence belongs to the UDP-glycosyltransferase family.

Its subcellular location is the microsome membrane. It is found in the endoplasmic reticulum membrane. It catalyses the reaction glucuronate acceptor + UDP-alpha-D-glucuronate = acceptor beta-D-glucuronoside + UDP + H(+). Its function is as follows. UDPGT is of major importance in the conjugation and subsequent elimination of potentially toxic xenobiotics and endogenous compounds. The chain is UDP-glucuronosyltransferase 2C1 (UGT2C1) from Oryctolagus cuniculus (Rabbit).